A 276-amino-acid chain; its full sequence is Carboxysome assembly protein CcmO (276 aa).

BMC domains are found at residues 16–100 and 120–204; these read ALGV…AVLP and AIGL…DSLP. Disordered regions lie at residues 200 to 219 and 252 to 276; these read MDSL…LQLP and QSAL…RDDQ.

This sequence belongs to the bacterial microcompartments protein family. Homooligomerizes, possibly as a trimer, interacts with CcmK2 in the carboxysome.

The protein localises to the carboxysome. Its function is as follows. Required for formation of the carboxysome, a polyhedral inclusion where RuBisCO (ribulose bisphosphate carboxylase, rbcL-rbcS) is sequestered. Required for recruitment of major shell protein CcmK2 to the pre-carboxysome. Suggested to be a carboxysome shell protein, but it is not detected in gels, mass spectrometry or by protein sequencing. In terms of biological role, beta-carboxysome assembly initiates when soluble RuBisCO is condensed into a liquid matrix in a pre-carboxysome by the RbcS-like domains of probably both CcmM58 and CcmM35. CcmN interacts with the N-terminus of CcmM58, and then recruits the CcmK2 major shell protein via CcmN's encapsulation peptide. Shell formation requires CcmK proteins and CcmO. CcmL caps the otherwise elongated carboxysome. Once fully encapsulated carboxysomes are formed, they migrate within the cell probably via interactions with the cytoskeleton. The chain is Carboxysome assembly protein CcmO from Synechococcus elongatus (strain ATCC 33912 / PCC 7942 / FACHB-805) (Anacystis nidulans R2).